A 74-amino-acid polypeptide reads, in one-letter code: Putative defensin-like protein 36 (74 aa).

An N-terminal signal peptide occupies residues 1-22; the sequence is MASNKVSFFLVLCLCILLAGEC. Cystine bridges form between Cys33/Cys59, Cys45/Cys69, and Cys49/Cys71.

Belongs to the DEFL family.

It is found in the secreted. In Arabidopsis thaliana (Mouse-ear cress), this protein is Putative defensin-like protein 36.